The sequence spans 584 residues: Insulin-like growth factor 2 mRNA-binding protein 3 (584 aa).

2 RRM domains span residues 2-75 (NKLY…HSVP) and 81-156 (RKLQ…YIPD). Residues 160–199 (AQQPPQQHPQGRRGFGQRGPPRQGSPSATTRQKPQSDVPL) form a disordered region. Residues 184–194 (SPSATTRQKPQ) show a composition bias toward polar residues. 4 KH domains span residues 196–261 (DVPL…CKII), 277–344 (EIPL…EEEI), 409–474 (SETV…QGRI), and 491–557 (KLEA…QRKI).

It belongs to the RRM IMP/VICKZ family. In terms of assembly, homodimer and multimer.

It is found in the cytoplasm. The protein localises to the nucleus. Its subcellular location is the P-body. The protein resides in the stress granule. Its function is as follows. RNA-binding factor that may recruit target transcripts to cytoplasmic protein-RNA complexes (mRNPs). This transcript 'caging' into mRNPs allows mRNA transport and transient storage. It also modulates the rate and location at which target transcripts encounter the translational apparatus and shields them from endonuclease attacks or microRNA-mediated degradation. Preferentially binds to N6-methyladenosine (m6A)-containing mRNAs and increases their stability. The protein is Insulin-like growth factor 2 mRNA-binding protein 3 (IGF2BP3) of Gallus gallus (Chicken).